A 375-amino-acid polypeptide reads, in one-letter code: E3 ubiquitin-protein ligase FANCL (375 aa).

At A2 the chain carries N-acetylalanine. Residues 104–294 (LPPPPQFYSS…KDVLEIDFPA (191 aa)) are UBC-RWD region (URD). Residues C307, C310, C324, C329, H334, C337, C359, and C362 each coordinate Zn(2+). The RING-type; degenerate zinc-finger motif lies at 307–363 (CGICYAYQLDGTIPDQVCDNSQCGQPFHQICLYEWLRGLLTSRQSFNIIFGECPYCS).

In terms of assembly, interacts with GGN. Belongs to the multisubunit FA complex composed of FANCA, FANCB, FANCC, FANCE, FANCF, FANCG, FANCL/PHF9 and FANCM. The complex is not found in FA patients. In complex with FANCF, FANCA and FANCG, but not with FANCC, nor FANCE, interacts with HES1; this interaction may be essential for the stability and nuclear localization of FA core complex proteins. Interacts with FANCI. Directly interacts (via the RING-type zinc finger) with UBE2T and UBE2W. In terms of processing, the RING-type zinc finger domain is monoubiquitinated in the presence of UBE2T and UBE2W.

It localises to the cytoplasm. It is found in the nucleus. The enzyme catalyses S-ubiquitinyl-[E2 ubiquitin-conjugating enzyme]-L-cysteine + [acceptor protein]-L-lysine = [E2 ubiquitin-conjugating enzyme]-L-cysteine + N(6)-ubiquitinyl-[acceptor protein]-L-lysine.. Its pathway is protein modification; protein ubiquitination. Ubiquitin ligase protein that mediates monoubiquitination of FANCD2 in the presence of UBE2T, a key step in the DNA damage pathway. Also mediates monoubiquitination of FANCI. May stimulate the ubiquitin release from UBE2W. May be required for proper primordial germ cell proliferation in the embryonic stage, whereas it is probably not needed for spermatogonial proliferation after birth. The polypeptide is E3 ubiquitin-protein ligase FANCL (FANCL) (Homo sapiens (Human)).